A 158-amino-acid polypeptide reads, in one-letter code: NAD(P)H-quinone oxidoreductase subunit J, chloroplastic (158 aa).

Belongs to the complex I 30 kDa subunit family. In terms of assembly, NDH is composed of at least 16 different subunits, 5 of which are encoded in the nucleus.

The protein localises to the plastid. It localises to the chloroplast thylakoid membrane. The catalysed reaction is a plastoquinone + NADH + (n+1) H(+)(in) = a plastoquinol + NAD(+) + n H(+)(out). It catalyses the reaction a plastoquinone + NADPH + (n+1) H(+)(in) = a plastoquinol + NADP(+) + n H(+)(out). Functionally, NDH shuttles electrons from NAD(P)H:plastoquinone, via FMN and iron-sulfur (Fe-S) centers, to quinones in the photosynthetic chain and possibly in a chloroplast respiratory chain. The immediate electron acceptor for the enzyme in this species is believed to be plastoquinone. Couples the redox reaction to proton translocation, and thus conserves the redox energy in a proton gradient. This is NAD(P)H-quinone oxidoreductase subunit J, chloroplastic from Arabis hirsuta (Hairy rock-cress).